Here is a 359-residue protein sequence, read N- to C-terminus: Methyltransferase eqxD (359 aa).

Residues 198 to 199 (GG), Asp-224, 248 to 249 (SF), Arg-264, and Arg-265 contribute to the S-adenosyl-L-methionine site.

It belongs to the class I-like SAM-binding methyltransferase superfamily. Cation-independent O-methyltransferase family.

It carries out the reaction trichosetin + S-adenosyl-L-methionine = equisetin + S-adenosyl-L-homocysteine + H(+). The protein operates within mycotoxin biosynthesis. Its function is as follows. Methyltransferase; part of the gene cluster that mediates the biosynthesis of equisetin, a trans-fused decalin-containing tetramic acid with antimicrobial activity. The PKS module of eqxS together with the enoylreductase eqxC catalyze the formation of the polyketide unit which is then conjugated to L-serine by the condensation domain of the eqxS NRPS module. Activity of the Dieckmann cyclase domain (RED) results in release of the Dieckmann product intermediate. Diels-Alderase eqx3 is involved in endo-selective Diels-Alder cycloaddition to form the decalin ring, leading to the production of N-desmethylequisetin also called trichosetin. Subsequent N-methylation is carried out by eqxD to give equisetin. The sequence is that of Methyltransferase eqxD from Fusarium heterosporum.